A 64-amino-acid chain; its full sequence is Ribosome biogenesis protein Nop10 (64 aa).

This sequence belongs to the NOP10 family.

Its function is as follows. Involved in ribosome biogenesis; more specifically in 18S rRNA pseudouridylation and in cleavage of pre-rRNA. The polypeptide is Ribosome biogenesis protein Nop10 (Ignicoccus hospitalis (strain KIN4/I / DSM 18386 / JCM 14125)).